We begin with the raw amino-acid sequence, 314 residues long: Methionyl-tRNA formyltransferase (314 aa).

113–116 (SLLP) serves as a coordination point for (6S)-5,6,7,8-tetrahydrofolate.

It belongs to the Fmt family.

It carries out the reaction L-methionyl-tRNA(fMet) + (6R)-10-formyltetrahydrofolate = N-formyl-L-methionyl-tRNA(fMet) + (6S)-5,6,7,8-tetrahydrofolate + H(+). Attaches a formyl group to the free amino group of methionyl-tRNA(fMet). The formyl group appears to play a dual role in the initiator identity of N-formylmethionyl-tRNA by promoting its recognition by IF2 and preventing the misappropriation of this tRNA by the elongation apparatus. This is Methionyl-tRNA formyltransferase from Pseudomonas aeruginosa (strain ATCC 15692 / DSM 22644 / CIP 104116 / JCM 14847 / LMG 12228 / 1C / PRS 101 / PAO1).